The following is a 430-amino-acid chain: MDETIKLLNKAESGLSGTIVVPGDKSISHRAVMFGAMANGTTNVSGFLPGDDCLSTIACFRQMGVAIEQEGDKVTVEGKGLDGLKEPNGVLDVGNSGTTIRLLLGVLSGRPFHSVVVGDDSIGKRPMARVTAPLRQMGAQIDGRETGNKTPLSIRGGQTKAIEYTMPVASAQVKSALLLAGLQAEGETSVTEPQTTRDHTERMLHAFGVKVTTAGKTISIQGGQSLQAADVVVPGDISSAAFFLVAGCIVPGSRVHLKNVGLNPTRAGILEVLKRSGAKLSIDEQVTTGGEPRGDMTISTSELSPFVIEGEEVPTLIDEIPVLAVLATQISGTTIIRDAEELKVKETNRIDTVVGELAKLGADIEATDDGMIIRGGKPLTGGKVDSHGDHRIGMALVIASLCANGPVELANIGAISVSYPQFFEHLQSLQ.

Positions 25, 26, and 30 each coordinate 3-phosphoshikimate. Lys-25 serves as a coordination point for phosphoenolpyruvate. Phosphoenolpyruvate is bound by residues Gly-97 and Arg-125. Ser-170, Gln-172, Asp-318, and Lys-345 together coordinate 3-phosphoshikimate. Gln-172 lines the phosphoenolpyruvate pocket. Asp-318 functions as the Proton acceptor in the catalytic mechanism. Positions 349 and 391 each coordinate phosphoenolpyruvate.

The protein belongs to the EPSP synthase family. As to quaternary structure, monomer.

The protein localises to the cytoplasm. It catalyses the reaction 3-phosphoshikimate + phosphoenolpyruvate = 5-O-(1-carboxyvinyl)-3-phosphoshikimate + phosphate. Its pathway is metabolic intermediate biosynthesis; chorismate biosynthesis; chorismate from D-erythrose 4-phosphate and phosphoenolpyruvate: step 6/7. Its function is as follows. Catalyzes the transfer of the enolpyruvyl moiety of phosphoenolpyruvate (PEP) to the 5-hydroxyl of shikimate-3-phosphate (S3P) to produce enolpyruvyl shikimate-3-phosphate and inorganic phosphate. This Shouchella clausii (strain KSM-K16) (Alkalihalobacillus clausii) protein is 3-phosphoshikimate 1-carboxyvinyltransferase.